Consider the following 312-residue polypeptide: Malate dehydrogenase (312 aa).

NAD(+) contacts are provided by residues 7–13 (GAAGGIG) and Asp34. Residues Arg81 and Arg87 each coordinate substrate. NAD(+) contacts are provided by residues Asn94 and 117 to 119 (ITN). 2 residues coordinate substrate: Asn119 and Arg153. His177 serves as the catalytic Proton acceptor. Residue Met227 participates in NAD(+) binding.

This sequence belongs to the LDH/MDH superfamily. MDH type 1 family. Homodimer.

It carries out the reaction (S)-malate + NAD(+) = oxaloacetate + NADH + H(+). Functionally, catalyzes the reversible oxidation of malate to oxaloacetate. This Salmonella dublin (strain CT_02021853) protein is Malate dehydrogenase.